The following is a 219-amino-acid chain: Ribose-5-phosphate isomerase A (219 aa).

Residues 28–31 (TGST), 81–84 (DGAD), and 94–97 (KGGG) contribute to the substrate site. The active-site Proton acceptor is the Glu-103. Lys-121 lines the substrate pocket.

It belongs to the ribose 5-phosphate isomerase family. In terms of assembly, homodimer.

The enzyme catalyses aldehydo-D-ribose 5-phosphate = D-ribulose 5-phosphate. It participates in carbohydrate degradation; pentose phosphate pathway; D-ribose 5-phosphate from D-ribulose 5-phosphate (non-oxidative stage): step 1/1. Functionally, catalyzes the reversible conversion of ribose-5-phosphate to ribulose 5-phosphate. The protein is Ribose-5-phosphate isomerase A of Salmonella choleraesuis (strain SC-B67).